A 273-amino-acid polypeptide reads, in one-letter code: Large ribosomal subunit protein uL2 (273 aa).

2 disordered regions span residues 35–54 (DSKSKSGGRNNNGRITTRHI) and 222–273 (GMAM…RRNK). Positions 39-49 (KSGGRNNNGRI) are enriched in polar residues. Positions 229–239 (DHPHGGGEGRN) are enriched in basic and acidic residues. A compositionally biased stretch (basic residues) spans 253 to 273 (KGFKTRKNKRTDKYIVRRRNK).

This sequence belongs to the universal ribosomal protein uL2 family. Part of the 50S ribosomal subunit. Forms a bridge to the 30S subunit in the 70S ribosome.

One of the primary rRNA binding proteins. Required for association of the 30S and 50S subunits to form the 70S ribosome, for tRNA binding and peptide bond formation. It has been suggested to have peptidyltransferase activity; this is somewhat controversial. Makes several contacts with the 16S rRNA in the 70S ribosome. In Aeromonas salmonicida (strain A449), this protein is Large ribosomal subunit protein uL2.